Here is a 289-residue protein sequence, read N- to C-terminus: BTB/POZ domain-containing protein KCTD7 (289 aa).

Residues 1 to 35 (MVVVTGREPDSRRQDGAMSSSDAEDDFLEPATPTA) form a disordered region. In terms of domain architecture, BTB spans 51–149 (EVVPLNIGGA…QLENMQPLKG (99 aa)).

Interacts with CUL3.

Its subcellular location is the cell membrane. It localises to the cytoplasm. It is found in the cytosol. May be involved in the control of excitability of cortical neurons. This is BTB/POZ domain-containing protein KCTD7 (KCTD7) from Homo sapiens (Human).